The primary structure comprises 471 residues: ATP synthase subunit beta (471 aa).

Residue 154 to 161 (GGAGVGKT) coordinates ATP.

The protein belongs to the ATPase alpha/beta chains family. F-type ATPases have 2 components, CF(1) - the catalytic core - and CF(0) - the membrane proton channel. CF(1) has five subunits: alpha(3), beta(3), gamma(1), delta(1), epsilon(1). CF(0) has three main subunits: a(1), b(2) and c(9-12). The alpha and beta chains form an alternating ring which encloses part of the gamma chain. CF(1) is attached to CF(0) by a central stalk formed by the gamma and epsilon chains, while a peripheral stalk is formed by the delta and b chains.

It localises to the cell membrane. It catalyses the reaction ATP + H2O + 4 H(+)(in) = ADP + phosphate + 5 H(+)(out). Its function is as follows. Produces ATP from ADP in the presence of a proton gradient across the membrane. The catalytic sites are hosted primarily by the beta subunits. This chain is ATP synthase subunit beta, found in Mesomycoplasma hyopneumoniae (strain 232) (Mycoplasma hyopneumoniae).